We begin with the raw amino-acid sequence, 491 residues long: Glutamate--tRNA ligase (491 aa).

Positions 14 to 24 (PSPTGSPHVGL) match the 'HIGH' region motif. Zn(2+) is bound by residues Cys111, Cys113, Cys136, and Asp138. The short motif at 257–261 (KLSKR) is the 'KMSKS' region element. Lys260 lines the ATP pocket.

Belongs to the class-I aminoacyl-tRNA synthetase family. Glutamate--tRNA ligase type 1 subfamily. In terms of assembly, monomer. Zn(2+) is required as a cofactor.

It is found in the cytoplasm. It catalyses the reaction tRNA(Glu) + L-glutamate + ATP = L-glutamyl-tRNA(Glu) + AMP + diphosphate. Functionally, catalyzes the attachment of glutamate to tRNA(Glu) in a two-step reaction: glutamate is first activated by ATP to form Glu-AMP and then transferred to the acceptor end of tRNA(Glu). The polypeptide is Glutamate--tRNA ligase (Nocardioides sp. (strain ATCC BAA-499 / JS614)).